Reading from the N-terminus, the 356-residue chain is Histidinol-phosphate aminotransferase (356 aa).

The residue at position 210 (Lys-210) is an N6-(pyridoxal phosphate)lysine.

It belongs to the class-II pyridoxal-phosphate-dependent aminotransferase family. Histidinol-phosphate aminotransferase subfamily. Homodimer. Pyridoxal 5'-phosphate serves as cofactor.

The enzyme catalyses L-histidinol phosphate + 2-oxoglutarate = 3-(imidazol-4-yl)-2-oxopropyl phosphate + L-glutamate. It functions in the pathway amino-acid biosynthesis; L-histidine biosynthesis; L-histidine from 5-phospho-alpha-D-ribose 1-diphosphate: step 7/9. This is Histidinol-phosphate aminotransferase from Gluconacetobacter diazotrophicus (strain ATCC 49037 / DSM 5601 / CCUG 37298 / CIP 103539 / LMG 7603 / PAl5).